Consider the following 393-residue polypeptide: MRSSAIIALLIVGLDAMGLGLIMPVLPTLLRELVPAEQVAGHYGALLSLYALMQVVFAPMLGQLSDSYGRRPVLLASLAGAAVDYTIMASAPVLWVLYIGRLVSGVTGATGAVAASTIADSTGEGSRARWFGYMGACYGAGMIAGPALGGMLGGISAHAPFIAAALLNGFAFLLACIFLKETHHSHGGTGKPVRIKPFVLLRLDDALRGLGALFAVFFIIQLIGQVPAALWVIYGEDRFQWNTATVGLSLAAFGATHAIFQAFVTGPLSSRLGERRTLLFGMAADGTGFVLLAFATQGWMVFPILLLLAAGGVGMPALQAMLSNNVSSNKQGALQGTLTSLTNLSSIAGPLGFTALYSATAGAWNGWVWIVGAILYLICLPILRRPFATSLVI.

The next 12 helical transmembrane spans lie at 6-26 (IIAL…MPVL), 44-64 (GALL…LGQL), 79-99 (AGAA…VLYI), 102-122 (LVSG…ADST), 135-155 (GACY…LGGI), 159-179 (APFI…CIFL), 213-233 (LFAV…LWVI), 244-264 (ATVG…QAFV), 277-297 (TLLF…FATQ), 298-318 (GWMV…MPAL), 341-361 (LTNL…SATA), and 363-383 (AWNG…LPIL).

It belongs to the major facilitator superfamily. TCR/Tet family.

It is found in the cell inner membrane. Resistance to tetracycline by an active tetracycline efflux. This is an energy-dependent process that decreases the accumulation of the antibiotic in whole cells. This protein functions as a metal-tetracycline/H(+) antiporter. The polypeptide is Tetracycline resistance protein, class G (tetA) (Vibrio anguillarum (Listonella anguillarum)).